Here is a 1079-residue protein sequence, read N- to C-terminus: Tudor domain-containing protein 7A (1079 aa).

The HTH OST-type 1 domain occupies 3-76; sequence DVELVKKMLR…TGEVMCFAGV (74 aa). A disordered region spans residues 153–175; the sequence is LPSSRAPAWQMNRKSPVPEKTSV. HTH OST-type domains are found at residues 205 to 270 and 366 to 434; these read DVEL…RLVY and LTTE…ILYT. Tudor domains lie at 519 to 576 and 708 to 765; these read SPKI…FMTL and RPFC…FLKE.

It belongs to the TDRD7 family.

Its subcellular location is the cytoplasm. Functionally, component of specific cytoplasmic RNA granules involved in post-transcriptional regulation of specific genes: probably acts by binding to specific mRNAs and regulating their translation. Probably required during spermatogenesis. Required for structural integrity of granules in primordial germ cells (PGCs). The sequence is that of Tudor domain-containing protein 7A (tdrd7a) from Danio rerio (Zebrafish).